We begin with the raw amino-acid sequence, 417 residues long: FAD-dependent monooxygenase aptC (417 aa).

The N-terminal stretch at 1 to 18 is a signal peptide; sequence MTLPVLIIGAGLSGLTTA. FAD contacts are provided by glutamate 32, alanine 43, arginine 117, aspartate 332, and glycine 345.

This sequence belongs to the paxM FAD-dependent monooxygenase family. The cofactor is FAD.

The enzyme catalyses 3,6,8,9-tetrahydroxy-1-oxo-3-(2-oxopropyl)-1,2,3,4-tetrahydroanthracene-2-carboxyl-[ACP] + NADPH + O2 + H(+) = 2,3,6,8,9-pentahydroxy-1-oxo-3-(2-oxopropyl)-1,2,3,4-tetrahydroanthracene-2-carboxyl-[ACP] + NADP(+) + H2O. It participates in secondary metabolite biosynthesis. In terms of biological role, FAD-dependent monooxygenase; part of the gene cluster that mediates the biosynthesis of asperthecin, an anthraquinone pigment. Polyketide synthase (PKS) aptA catalyzes the formation of the aromatic polyketide from acetyl coenzyme A and seven malonyl coenzyme A molecules. Polyketide is subsequently hydrolyzed by the action of the hydrolase aptB into endocrocin-9-anthrone. Endocrocin-9-anthrone is then oxidized into endocrocin by the monooxygenase aptC. Endocrocin is likely to decarboxylate spontaneously to form emodin which explains why there is no decarboxylase in the asperthecin biosynthesis cluster. Finally, aptC or another endogenous oxygenase catalyzes additional oxidation steps to form asperthecin. This is FAD-dependent monooxygenase aptC from Emericella nidulans (strain FGSC A4 / ATCC 38163 / CBS 112.46 / NRRL 194 / M139) (Aspergillus nidulans).